The following is a 300-amino-acid chain: Fe(3+) dicitrate-binding periplasmic protein FecB (300 aa).

An N-terminal signal peptide occupies residues 1 to 21 (MLAFIRFLFAGLLLVISHAFA). One can recognise a Fe/B12 periplasmic-binding domain in the interval 39 to 295 (RIVVLELSFA…DTVKIFHHQP (257 aa)).

This sequence belongs to the bacterial solute-binding protein 8 family. As to quaternary structure, the complex is composed of two ATP-binding proteins (FecE), two transmembrane proteins (FecC and FecD) and a solute-binding protein (FecB). Interacts with FecC and FecD.

Its subcellular location is the periplasm. Part of the ABC transporter complex FecBCDE involved in citrate-dependent Fe(3+) uptake. Binds both iron-free and iron-loaded citrate although it binds iron-loaded citrate with a higher affinity. Binds different forms of Fe(3+)-citrate as well as citrate complexed with various representative Fe(3+)-mimics (Ga(3+), Al(3+), Sc(3+) and In(3+)) and a representative divalent metal ion (Mg(2+)). Can also bind various tricarboxylates in iron-free and iron-loaded form. The polypeptide is Fe(3+) dicitrate-binding periplasmic protein FecB (Escherichia coli (strain K12)).